Here is a 359-residue protein sequence, read N- to C-terminus: 3-dehydroquinate synthase (359 aa).

NAD(+) contacts are provided by residues 70–75 (DAEGGK), 104–108 (GAATD), 128–129 (TT), K141, and K150. Positions 183, 246, and 262 each coordinate Zn(2+).

Belongs to the sugar phosphate cyclases superfamily. Dehydroquinate synthase family. Requires Co(2+) as cofactor. The cofactor is Zn(2+). NAD(+) is required as a cofactor.

It is found in the cytoplasm. It carries out the reaction 7-phospho-2-dehydro-3-deoxy-D-arabino-heptonate = 3-dehydroquinate + phosphate. Its pathway is metabolic intermediate biosynthesis; chorismate biosynthesis; chorismate from D-erythrose 4-phosphate and phosphoenolpyruvate: step 2/7. Catalyzes the conversion of 3-deoxy-D-arabino-heptulosonate 7-phosphate (DAHP) to dehydroquinate (DHQ). The chain is 3-dehydroquinate synthase from Mycolicibacterium gilvum (strain PYR-GCK) (Mycobacterium gilvum (strain PYR-GCK)).